The sequence spans 137 residues: Small ribosomal subunit protein uS11 (137 aa).

The segment at 116 to 137 (EDVTPIPHDGTRRPGGKRGRRV) is disordered.

This sequence belongs to the universal ribosomal protein uS11 family. Part of the 30S ribosomal subunit.

Located on the platform of the 30S subunit. The polypeptide is Small ribosomal subunit protein uS11 (Methanopyrus kandleri (strain AV19 / DSM 6324 / JCM 9639 / NBRC 100938)).